We begin with the raw amino-acid sequence, 342 residues long: DNA-directed RNA polymerase subunit alpha (342 aa).

Residues 1–239 are alpha N-terminal domain (alpha-NTD); it reads MTTFLAKNWS…DQLQVFINFQ (239 aa). The segment at 254-342 is alpha C-terminal domain (alpha-CTD); the sequence is INPVLLKKVY…SLAKKHEDQY (89 aa).

This sequence belongs to the RNA polymerase alpha chain family. Homodimer. The RNAP catalytic core consists of 2 alpha, 1 beta, 1 beta' and 1 omega subunit. When a sigma factor is associated with the core the holoenzyme is formed, which can initiate transcription.

The enzyme catalyses RNA(n) + a ribonucleoside 5'-triphosphate = RNA(n+1) + diphosphate. DNA-dependent RNA polymerase catalyzes the transcription of DNA into RNA using the four ribonucleoside triphosphates as substrates. The protein is DNA-directed RNA polymerase subunit alpha of Orientia tsutsugamushi (strain Ikeda) (Rickettsia tsutsugamushi).